The chain runs to 223 residues: Protein disulfide-isomerase-like protein EhSep2 (223 aa).

Positions 1-17 (MALRSLTLLCAAAGASA) are cleaved as a signal peptide. A Thioredoxin domain is found at 18-125 (GAIELTPDNF…DELKKFAENE (108 aa)). Residue Sec-47 is a non-standard amino acid, selenocysteine. The stretch at 155 to 201 (EKRTEMLETLKKELADAESTHEALLKELQATYKESMDKLEKLKEESA) forms a coiled coil. Positions 201–223 (APKIKLLKAATPAPKAEGAKDEV) are disordered. Low complexity predominate over residues 203–216 (KIKLLKAATPAPKA). Positions 220–223 (KDEV) match the Prevents secretion from ER motif.

Belongs to the protein disulfide isomerase family.

The protein resides in the endoplasmic reticulum lumen. The chain is Protein disulfide-isomerase-like protein EhSep2 (SEP2) from Emiliania huxleyi (Coccolithophore).